Reading from the N-terminus, the 518-residue chain is Envelope protein (518 aa).

The first 31 residues, 1 to 31 (MSVNRSSIKSLLMVFMIVSSSLLAPVGGAAA), serve as a signal peptide directing secretion. At 32–485 (DEFRTPAASD…IEDREPEAGG (454 aa)) the chain is on the extracellular side. Asn213 is a glycosylation site (N-linked (GlcNAc...) (hybrid) asparagine; by host). Residues 486-506 (FFGSGSTDTMLVGLLALAGVL) form a helical membrane-spanning segment. Residues 507-518 (LLAQSNNRGGRR) lie on the Cytoplasmic side of the membrane.

N-glycosylated by a pentasaccharide comprising glucose, glucuronic acid and a terminal 5-N-formyl-legionaminic acid residue.

Its subcellular location is the virion membrane. Its function is as follows. Envelope protein that may play a role in host-cell attachment and viral genome entry. This is Envelope protein from Halorubrum sp. PV6 (HRPV-1).